A 294-amino-acid chain; its full sequence is Acetylglutamate kinase (294 aa).

Residues 60–61, Arg82, and Asn186 each bind substrate; that span reads GG.

This sequence belongs to the acetylglutamate kinase family. ArgB subfamily.

It localises to the cytoplasm. The catalysed reaction is N-acetyl-L-glutamate + ATP = N-acetyl-L-glutamyl 5-phosphate + ADP. It participates in amino-acid biosynthesis; L-arginine biosynthesis; N(2)-acetyl-L-ornithine from L-glutamate: step 2/4. Its function is as follows. Catalyzes the ATP-dependent phosphorylation of N-acetyl-L-glutamate. The protein is Acetylglutamate kinase of Methanospirillum hungatei JF-1 (strain ATCC 27890 / DSM 864 / NBRC 100397 / JF-1).